The following is a 240-amino-acid chain: Penton protein H240R (240 aa).

It belongs to the asfivirus H240R family.

It is found in the virion. Its function is as follows. Forms the penton at the fivefold vertices of the icosahedral capsid. Together with the minor capsid proteins (p17, p49, and M1249L), forms a complicated network immediately below the outer capsid shell, stabilizing the whole capsid. This African swine fever virus (isolate Tick/South Africa/Pretoriuskop Pr4/1996) (ASFV) protein is Penton protein H240R.